Here is a 323-residue protein sequence, read N- to C-terminus: Pantothenate kinase (323 aa).

Residue 101 to 108 coordinates ATP; sequence GSVAVGKS.

This sequence belongs to the prokaryotic pantothenate kinase family.

The protein resides in the cytoplasm. The catalysed reaction is (R)-pantothenate + ATP = (R)-4'-phosphopantothenate + ADP + H(+). Its pathway is cofactor biosynthesis; coenzyme A biosynthesis; CoA from (R)-pantothenate: step 1/5. The chain is Pantothenate kinase from Xanthobacter autotrophicus (strain ATCC BAA-1158 / Py2).